Reading from the N-terminus, the 563-residue chain is MTIVGLVIQQHDGTILFQNVREYLSLDKAHLAAKAFKNQISSYDENFITKGSISHLTGSVVVLNMYRVYYMILNELFILAISQANDNPFEGSIYLARAKRVLWSVSKDFTTTQINKKYTEVYFALERVLFGEDGVEVLSQKISEVSPHQPPHYNTHHHTSTPSVAPSFITGGSTTPPPITIFGRLIEPNQSNSLSNSISNSNSNNNNNNNNDSININSINSNIYQTTVPLTLSNVLNSSNFNNNNNNNNNNNNNNNNSNNSLNNSNSNSNIISPSSSSGNLSSFNNNNNNEEYNNYNNNYNSLDNSYSLQFESLMRLEQSNIPEKIFTQPNTLPKIDKHIYDPPQTIKWGNPSVSHIGSSASSTRVTNRIMFTLRHPNAGKEAKEKEKEKENEFKEQQEINNMNNNNNGANGNSGGSGNVIIGSAAAGSASSKSSPSTSPLSSSYNPSSPETSENSFSATPISDSNSLKNSIDNNNNNNNNNNNNNNSGDTPETPKRKFSLSMGTFNNSKSSLSTSNSNISTPDNGASSPLASSTSGSASSAAAPPPVPLTNSAKTKMNFLNF.

Disordered stretches follow at residues 146–170 (SPHQPPHYNTHHHTSTPSVAPSFIT), 192–213 (NSLSNSISNSNSNNNNNNNNDS), 235–298 (VLNS…NYNN), 376–395 (HPNAGKEAKEKEKEKENEFK), and 428–563 (GSAS…FLNF). Residues 379-395 (AGKEAKEKEKEKENEFK) are compositionally biased toward basic and acidic residues. Residues 428–459 (GSASSKSSPSTSPLSSSYNPSSPETSENSFSA) show a composition bias toward low complexity. A compositionally biased stretch (polar residues) spans 460-473 (TPISDSNSLKNSID). 2 stretches are compositionally biased toward low complexity: residues 474 to 487 (NNNNNNNNNNNNNN) and 507 to 543 (NNSKSSLSTSNSNISTPDNGASSPLASSTSGSASSAA). Polar residues predominate over residues 552–563 (NSAKTKMNFLNF).

As to quaternary structure, component of the TSET complex, a heterohexamer composed of tstA, tstB, tstC, tstD, tstE and tstF, which may act in plasma membrane turnover. tstA, tstB, tstC and tstD are likely to be the core complex members with tstE and tstF acting as associated scaffold proteins.

The sequence is that of TSET complex member tstC from Dictyostelium discoideum (Social amoeba).